We begin with the raw amino-acid sequence, 131 residues long: Ribosome-binding factor A (131 aa).

This sequence belongs to the RbfA family. As to quaternary structure, monomer. Binds 30S ribosomal subunits, but not 50S ribosomal subunits or 70S ribosomes.

It is found in the cytoplasm. In terms of biological role, one of several proteins that assist in the late maturation steps of the functional core of the 30S ribosomal subunit. Associates with free 30S ribosomal subunits (but not with 30S subunits that are part of 70S ribosomes or polysomes). Required for efficient processing of 16S rRNA. May interact with the 5'-terminal helix region of 16S rRNA. The polypeptide is Ribosome-binding factor A (Chromohalobacter salexigens (strain ATCC BAA-138 / DSM 3043 / CIP 106854 / NCIMB 13768 / 1H11)).